Reading from the N-terminus, the 76-residue chain is MSVLGQQAAIGIVVHLIFIAVTWWALQAVNIDPLIKKGKVVQARLLMILLTIAIGTAVANFFLDYLNYSQQLPYLF.

The next 2 helical transmembrane spans lie at 9-29 (AIGI…LQAV) and 45-65 (LLMI…FLDY).

It localises to the cell membrane. This is an uncharacterized protein from Bacillus subtilis (strain 168).